The chain runs to 39 residues: Omega-theraphotoxin-Ba1b (39 aa).

Disulfide bonds link C4–C17, C8–C31, and C25–C36.

It belongs to the neurotoxin 12 (Hwtx-2) family. 06 (TXP1) subfamily. As to expression, expressed by the venom gland.

The protein localises to the secreted. Functionally, inhibits voltage-gated calcium channels (Cav) in rat cerebellar granule cells. Has insecticidal activity to crickets (Acheta domesticus). Is not toxic to mice. This Brachypelma albiceps (Mexican golden redrump tarantula) protein is Omega-theraphotoxin-Ba1b.